Reading from the N-terminus, the 162-residue chain is Transcription elongation factor GreB (162 aa).

Positions K52–K73 form a coiled coil.

The protein belongs to the GreA/GreB family. GreB subfamily.

Necessary for efficient RNA polymerase transcription elongation past template-encoded arresting sites. The arresting sites in DNA have the property of trapping a certain fraction of elongating RNA polymerases that pass through, resulting in locked ternary complexes. Cleavage of the nascent transcript by cleavage factors such as GreA or GreB allows the resumption of elongation from the new 3'terminus. GreB releases sequences of up to 9 nucleotides in length. This chain is Transcription elongation factor GreB, found in Pseudomonas putida (strain ATCC 47054 / DSM 6125 / CFBP 8728 / NCIMB 11950 / KT2440).